The primary structure comprises 357 residues: Uroporphyrinogen decarboxylase (357 aa).

Residues 27–31 (RQAGR), aspartate 77, tyrosine 154, threonine 209, and histidine 327 contribute to the substrate site.

The protein belongs to the uroporphyrinogen decarboxylase family. In terms of assembly, homodimer.

It localises to the cytoplasm. It catalyses the reaction uroporphyrinogen III + 4 H(+) = coproporphyrinogen III + 4 CO2. The protein operates within porphyrin-containing compound metabolism; protoporphyrin-IX biosynthesis; coproporphyrinogen-III from 5-aminolevulinate: step 4/4. In terms of biological role, catalyzes the decarboxylation of four acetate groups of uroporphyrinogen-III to yield coproporphyrinogen-III. The chain is Uroporphyrinogen decarboxylase from Proteus mirabilis (strain HI4320).